A 465-amino-acid chain; its full sequence is 3-isopropylmalate dehydratase large subunit (465 aa).

C347, C407, and C410 together coordinate [4Fe-4S] cluster.

It belongs to the aconitase/IPM isomerase family. LeuC type 1 subfamily. As to quaternary structure, heterodimer of LeuC and LeuD. The cofactor is [4Fe-4S] cluster.

It carries out the reaction (2R,3S)-3-isopropylmalate = (2S)-2-isopropylmalate. The protein operates within amino-acid biosynthesis; L-leucine biosynthesis; L-leucine from 3-methyl-2-oxobutanoate: step 2/4. Its function is as follows. Catalyzes the isomerization between 2-isopropylmalate and 3-isopropylmalate, via the formation of 2-isopropylmaleate. In Tolumonas auensis (strain DSM 9187 / NBRC 110442 / TA 4), this protein is 3-isopropylmalate dehydratase large subunit.